The following is a 110-amino-acid chain: UPF0102 protein HH_1751 (110 aa).

The protein belongs to the UPF0102 family.

The protein is UPF0102 protein HH_1751 of Helicobacter hepaticus (strain ATCC 51449 / 3B1).